Consider the following 209-residue polypeptide: Large ribosomal subunit protein eL13 (209 aa).

It belongs to the eukaryotic ribosomal protein eL13 family. In terms of assembly, component of the 60S large ribosomal subunit (LSU).

The protein resides in the cytoplasm. Functionally, component of the ribosome, a large ribonucleoprotein complex responsible for the synthesis of proteins in the cell. The small ribosomal subunit (SSU) binds messenger RNAs (mRNAs) and translates the encoded message by selecting cognate aminoacyl-transfer RNA (tRNA) molecules. The large subunit (LSU) contains the ribosomal catalytic site termed the peptidyl transferase center (PTC), which catalyzes the formation of peptide bonds, thereby polymerizing the amino acids delivered by tRNAs into a polypeptide chain. The nascent polypeptides leave the ribosome through a tunnel in the LSU and interact with protein factors that function in enzymatic processing, targeting, and the membrane insertion of nascent chains at the exit of the ribosomal tunnel. As part of the LSU, it is probably required for its formation and the maturation of rRNAs. The sequence is that of Large ribosomal subunit protein eL13 (rpl13) from Dictyostelium discoideum (Social amoeba).